A 177-amino-acid polypeptide reads, in one-letter code: Small ribosomal subunit protein uS5 (177 aa).

The region spanning 21 to 84 (LKEKMISVNR…DEARRGMIKI (64 aa)) is the S5 DRBM domain.

The protein belongs to the universal ribosomal protein uS5 family. In terms of assembly, part of the 30S ribosomal subunit. Contacts proteins S4 and S8.

In terms of biological role, with S4 and S12 plays an important role in translational accuracy. Functionally, located at the back of the 30S subunit body where it stabilizes the conformation of the head with respect to the body. This chain is Small ribosomal subunit protein uS5, found in Nitrosomonas eutropha (strain DSM 101675 / C91 / Nm57).